A 227-amino-acid chain; its full sequence is MLTWTPLESNPEVLTKYIHKLGVSPAWSVTDVIGLEDDTLEWIPRPVKAFILLFPCSETYEKHRAEEHDRIKEVEEQHPEDLFYMRQFTHNACGTVALIHSVANNKEVDIDRGVLKDFLEKTASLSPEERGRALEKDEKFTADHEALAQEGQTNAANHEKVIHHFIALVNKEGTLYELDGRKSFPIKHGPTSEETFVKDAAKVCKEFMARDPNEVRFTVLALTAAQQ.

The UCH catalytic domain maps to 3–224; sequence TWTPLESNPE…VRFTVLALTA (222 aa). The active-site Nucleophile is the Cys-93. His-164 (proton donor) is an active-site residue.

Belongs to the peptidase C12 family.

It catalyses the reaction Thiol-dependent hydrolysis of ester, thioester, amide, peptide and isopeptide bonds formed by the C-terminal Gly of ubiquitin (a 76-residue protein attached to proteins as an intracellular targeting signal).. Its function is as follows. Ubiquitin-protein hydrolase is involved both in the processing of ubiquitin precursors and of ubiquitinated proteins. This enzyme is a thiol protease that recognizes and hydrolyzes a peptide bond at the C-terminal glycine of ubiquitin. In Drosophila melanogaster (Fruit fly), this protein is Ubiquitin carboxyl-terminal hydrolase (Uch).